A 255-amino-acid polypeptide reads, in one-letter code: 5'-nucleotidase SurE (255 aa).

Aspartate 8, aspartate 9, serine 40, and asparagine 93 together coordinate a divalent metal cation.

The protein belongs to the SurE nucleotidase family. A divalent metal cation serves as cofactor.

It is found in the cytoplasm. The catalysed reaction is a ribonucleoside 5'-phosphate + H2O = a ribonucleoside + phosphate. Its function is as follows. Nucleotidase that shows phosphatase activity on nucleoside 5'-monophosphates. The protein is 5'-nucleotidase SurE of Rhodopseudomonas palustris (strain HaA2).